The following is a 154-amino-acid chain: Peptide deformylase (154 aa).

Residues Cys90 and His132 each contribute to the Fe cation site. Glu133 is a catalytic residue. A Fe cation-binding site is contributed by His136.

Belongs to the polypeptide deformylase family. Fe(2+) is required as a cofactor.

It carries out the reaction N-terminal N-formyl-L-methionyl-[peptide] + H2O = N-terminal L-methionyl-[peptide] + formate. Removes the formyl group from the N-terminal Met of newly synthesized proteins. Requires at least a dipeptide for an efficient rate of reaction. N-terminal L-methionine is a prerequisite for activity but the enzyme has broad specificity at other positions. In Halothermothrix orenii (strain H 168 / OCM 544 / DSM 9562), this protein is Peptide deformylase.